The sequence spans 286 residues: Homeobox-leucine zipper protein ATHB-20 (286 aa).

The homeobox DNA-binding region spans 84–143 (LGEKKKRLQLEQVKALEKSFELGNKLEPERKIQLAKALGMQPRQIAIWFQNRRARWKTRQ). The tract at residues 144-179 (LERDYDSLKKQFESLKSDNASLLAYNKKLLAEVMAL) is leucine-zipper.

This sequence belongs to the HD-ZIP homeobox family. Class I subfamily. Widely expressed.

The protein localises to the nucleus. Functionally, probable transcription factor. This chain is Homeobox-leucine zipper protein ATHB-20 (ATHB-20), found in Arabidopsis thaliana (Mouse-ear cress).